The primary structure comprises 247 residues: Probable transcriptional regulatory protein ETA_14870 (247 aa).

Residues 1–20 (MAGHSKWANTKHRKAAQDAK) form a disordered region.

Belongs to the TACO1 family.

Its subcellular location is the cytoplasm. The protein is Probable transcriptional regulatory protein ETA_14870 of Erwinia tasmaniensis (strain DSM 17950 / CFBP 7177 / CIP 109463 / NCPPB 4357 / Et1/99).